The following is a 541-amino-acid chain: Glucose-6-phosphate isomerase (541 aa).

Glutamate 346 serves as the catalytic Proton donor. Residues histidine 377 and lysine 506 contribute to the active site.

This sequence belongs to the GPI family.

Its subcellular location is the cytoplasm. It catalyses the reaction alpha-D-glucose 6-phosphate = beta-D-fructose 6-phosphate. It functions in the pathway carbohydrate biosynthesis; gluconeogenesis. Its pathway is carbohydrate degradation; glycolysis; D-glyceraldehyde 3-phosphate and glycerone phosphate from D-glucose: step 2/4. Catalyzes the reversible isomerization of glucose-6-phosphate to fructose-6-phosphate. The polypeptide is Glucose-6-phosphate isomerase (Rhizobium etli (strain ATCC 51251 / DSM 11541 / JCM 21823 / NBRC 15573 / CFN 42)).